Reading from the N-terminus, the 202-residue chain is ATP-dependent Clp protease proteolytic subunit (202 aa).

Ser-101 (nucleophile) is an active-site residue. The active site involves His-126.

The protein belongs to the peptidase S14 family. Component of the chloroplastic Clp protease core complex.

The protein resides in the plastid. The protein localises to the chloroplast stroma. It carries out the reaction Hydrolysis of proteins to small peptides in the presence of ATP and magnesium. alpha-casein is the usual test substrate. In the absence of ATP, only oligopeptides shorter than five residues are hydrolyzed (such as succinyl-Leu-Tyr-|-NHMec, and Leu-Tyr-Leu-|-Tyr-Trp, in which cleavage of the -Tyr-|-Leu- and -Tyr-|-Trp bonds also occurs).. In terms of biological role, cleaves peptides in various proteins in a process that requires ATP hydrolysis. Has a chymotrypsin-like activity. Plays a major role in the degradation of misfolded proteins. This chain is ATP-dependent Clp protease proteolytic subunit, found in Acorus gramineus (Dwarf sweet flag).